We begin with the raw amino-acid sequence, 77 residues long: Acyl carrier protein (77 aa).

Residues 2 to 77 (ADVLERVTKI…DAVTYIESHL (76 aa)) form the Carrier domain. Serine 37 is subject to O-(pantetheine 4'-phosphoryl)serine.

It belongs to the acyl carrier protein (ACP) family. 4'-phosphopantetheine is transferred from CoA to a specific serine of apo-ACP by AcpS. This modification is essential for activity because fatty acids are bound in thioester linkage to the sulfhydryl of the prosthetic group.

Its subcellular location is the cytoplasm. It participates in lipid metabolism; fatty acid biosynthesis. Carrier of the growing fatty acid chain in fatty acid biosynthesis. This is Acyl carrier protein from Bacillus anthracis (strain A0248).